The sequence spans 271 residues: Insulin-like growth factor-binding protein 5 (271 aa).

The N-terminal stretch at 1-19 is a signal peptide; it reads MVLTAVLLLLAACAGPAQG. The 81-residue stretch at 22–102 folds into the IGFBP N-terminal domain; the sequence is SFVHCEPCDE…LHGRGVCLNE (81 aa). Disulfide bonds link cysteine 26–cysteine 52, cysteine 29–cysteine 54, cysteine 37–cysteine 55, cysteine 44–cysteine 58, cysteine 66–cysteine 79, and cysteine 73–cysteine 99. Residues 109–121 are compositionally biased toward basic and acidic residues; sequence AKIERDSREHEEP. The tract at residues 109 to 129 is disordered; the sequence is AKIERDSREHEEPTTSEMAEE. Phosphoserine is present on serine 115. In terms of domain architecture, Thyroglobulin type-1 spans 188-262; sequence QGPCRRHMEA…MEYVDGDFQC (75 aa). Intrachain disulfides connect cysteine 191–cysteine 218, cysteine 229–cysteine 240, and cysteine 242–cysteine 262.

In terms of assembly, interacts with IGF1; this interaction enhances the growth stimulatory effects of IGF1 on fibroblasts. Interacts with CAV1; this interaction allows trafficking of IGFBP5 from the plasma membrane to the nucleus. Interacts with NCL; this interaction is necessary for IGFBP5 localization to the nucleus.

It is found in the secreted. It localises to the cytoplasm. The protein localises to the nucleus. Functionally, multifunctional protein that plays a critical role in regulating the availability of IGFs to their receptors and thereby regulates IGF-mediated cellular processes including proliferation, differentiation, and apoptosis in a cell-type specific manner. Increases the cell proliferation of osteoblasts, intestinal smooth muscle cells and neuroblastoma cells. Enhances adhesion and survival of epithelial cells but decreases adhesion of mesenchymal cells. Once secreted, acts as a major mediator of mTORC1-dependent feedback inhibition of IGF1 signaling. Also plays a role in the induction of extracellular matrix (ECM) production and deposition independently of its nuclear translocation and binding to IGFs. Acts itself as a growth factor that can act independently of IGFs to regulate bone formation. Acts as a ligand for the ROR1 receptor which triggers formation of ROR1/HER2 heterodimer to enhance CREB oncogenic signaling. The protein is Insulin-like growth factor-binding protein 5 (IGFBP5) of Sus scrofa (Pig).